A 161-amino-acid polypeptide reads, in one-letter code: 2-C-methyl-D-erythritol 2,4-cyclodiphosphate synthase (161 aa).

A divalent metal cation contacts are provided by Asp10 and His12. 4-CDP-2-C-methyl-D-erythritol 2-phosphate is bound by residues 10 to 12 (DVH) and 36 to 37 (HS). Residue His44 coordinates a divalent metal cation. 4-CDP-2-C-methyl-D-erythritol 2-phosphate contacts are provided by residues 58-60 (DIG), 63-67 (FPDTD), 102-108 (AQAPKMA), 134-137 (TTTE), Phe141, and Arg144.

This sequence belongs to the IspF family. As to quaternary structure, homotrimer. The cofactor is a divalent metal cation.

It carries out the reaction 4-CDP-2-C-methyl-D-erythritol 2-phosphate = 2-C-methyl-D-erythritol 2,4-cyclic diphosphate + CMP. It functions in the pathway isoprenoid biosynthesis; isopentenyl diphosphate biosynthesis via DXP pathway; isopentenyl diphosphate from 1-deoxy-D-xylulose 5-phosphate: step 4/6. Functionally, involved in the biosynthesis of isopentenyl diphosphate (IPP) and dimethylallyl diphosphate (DMAPP), two major building blocks of isoprenoid compounds. Catalyzes the conversion of 4-diphosphocytidyl-2-C-methyl-D-erythritol 2-phosphate (CDP-ME2P) to 2-C-methyl-D-erythritol 2,4-cyclodiphosphate (ME-CPP) with a corresponding release of cytidine 5-monophosphate (CMP). The chain is 2-C-methyl-D-erythritol 2,4-cyclodiphosphate synthase from Shewanella baltica (strain OS155 / ATCC BAA-1091).